The sequence spans 116 residues: MRIKRGFKARHRRKKILKLAKGFRGGHSKLFKTAKNTVDKALGYAYRDRKQRKRDFRRLWIARINAAVRMHSLSYSRFMHGLKKAGVELDRKVLAELAISDPSGFSKVVAVAAEQQ.

Belongs to the bacterial ribosomal protein bL20 family.

Its function is as follows. Binds directly to 23S ribosomal RNA and is necessary for the in vitro assembly process of the 50S ribosomal subunit. It is not involved in the protein synthesizing functions of that subunit. This is Large ribosomal subunit protein bL20 from Desulfosudis oleivorans (strain DSM 6200 / JCM 39069 / Hxd3) (Desulfococcus oleovorans).